The chain runs to 641 residues: uncharacterized protein (641 aa).

Ser112 carries the post-translational modification Phosphoserine. Disordered regions lie at residues Ser118–Thr243, Lys261–Ile289, Asp355–Ala386, and Asp404–Ser430. Polar residues predominate over residues Ala132–Gly162. At Ser198 the chain carries Phosphoserine. 2 stretches are compositionally biased toward polar residues: residues Asn222–Asn234 and Arg278–Ile289. Residues Asp355–Arg368 show a composition bias toward basic and acidic residues. 2 stretches are compositionally biased toward low complexity: residues Arg374–Arg383 and Ser421–Ser430.

This is an uncharacterized protein from Mus musculus (Mouse).